Here is a 167-residue protein sequence, read N- to C-terminus: Glutathione peroxidase 1 (167 aa).

Cysteine 41 is an active-site residue.

The protein belongs to the glutathione peroxidase family.

It catalyses the reaction 2 glutathione + H2O2 = glutathione disulfide + 2 H2O. In terms of biological role, may constitute a glutathione peroxidase-like protective system against oxidative stresses. In Helianthus annuus (Common sunflower), this protein is Glutathione peroxidase 1 (GPXHA-1).